The chain runs to 163 residues: Bursicon (163 aa).

The first 23 residues, 1-23 (MKSTFLVVLELAFFLLPGRVLYA), serve as a signal peptide directing secretion. Disulfide bonds link cysteine 39-cysteine 88, cysteine 53-cysteine 102, cysteine 63-cysteine 123, cysteine 67-cysteine 125, and cysteine 85-cysteine 128. The 91-residue stretch at 39–129 (CQVTPVIHVL…PLECMCRPCT (91 aa)) folds into the CTCK domain.

As to quaternary structure, heterodimer of burs and pburs.

It localises to the secreted. Its function is as follows. Final heterodimeric neurohormone released at the end of the molting cycle, involved in the sclerotization (tanning) of the insect cuticle, melanization and wing spreading. The chain is Bursicon (burs124) from Anopheles gambiae (African malaria mosquito).